A 362-amino-acid polypeptide reads, in one-letter code: Cobalt-precorrin-5B C(1)-methyltransferase (362 aa).

This sequence belongs to the CbiD family.

The enzyme catalyses Co-precorrin-5B + S-adenosyl-L-methionine = Co-precorrin-6A + S-adenosyl-L-homocysteine. It participates in cofactor biosynthesis; adenosylcobalamin biosynthesis; cob(II)yrinate a,c-diamide from sirohydrochlorin (anaerobic route): step 6/10. Its function is as follows. Catalyzes the methylation of C-1 in cobalt-precorrin-5B to form cobalt-precorrin-6A. This chain is Cobalt-precorrin-5B C(1)-methyltransferase, found in Geotalea daltonii (strain DSM 22248 / JCM 15807 / FRC-32) (Geobacter daltonii).